We begin with the raw amino-acid sequence, 2116 residues long: Unconventional myosin-VIIb (2116 aa).

The 696-residue stretch at Gln-65 to Ser-760 folds into the Myosin motor domain. Residue Gly-158–Thr-165 participates in ATP binding. The tract at residues Leu-637–Glu-659 is actin-binding. 6 consecutive IQ domains span residues Ile-745–Arg-765, Leu-763–Thr-792, Gln-786–Arg-815, Glu-814–Gln-834, Met-832–Val-861, and Lys-855–Leu-884. Ser-904 carries the phosphoserine modification. The mediates interaction with ANKS4B stretch occupies residues Glu-916 to Asn-1542. The region spanning His-989 to Lys-1192 is the MyTH4 1 domain. In terms of domain architecture, FERM 1 spans Ile-1197–Ala-1506. Ser-1371 carries the post-translational modification Phosphoserine. Residues Glu-1501–Thr-1567 enclose the SH3 domain. Positions Glu-1501–Thr-2116 are mediates interaction with CDHR2, CDHR5 and USH1C. MyTH4 domains follow at residues Tyr-1644–Glu-1793 and Glu-1790–Leu-1896. A Phosphoserine modification is found at Ser-1645. Positions Ile-1799–Met-2102 constitute an FERM 2 domain.

It belongs to the TRAFAC class myosin-kinesin ATPase superfamily. Myosin family. As to quaternary structure, part of the IMAC/intermicrovillar adhesion complex/intermicrovillar tip-link complex composed of ANKS4B, MYO7B, USH1C, CDHR2 and CDHR5. Interacts with CDHR2. Interacts with CDHR5. Interacts with USH1C. Interacts with ANKS4B; requires initial interaction with USH1C. Interacts with CALML4; the interaction mediates the association of CALML4 with the IMAC/intermicrovillar adhesion complex.

Its subcellular location is the cytoplasm. It localises to the cytoskeleton. The protein localises to the cell projection. It is found in the microvillus. Its function is as follows. Myosins are actin-based motor molecules with ATPase activity. Their highly divergent tails are presumed to bind to membranous compartments, which would be moved relative to actin filaments. As part of the intermicrovillar adhesion complex/IMAC plays a role in epithelial brush border differentiation, controlling microvilli organization and length. May link the complex to the actin core bundle of microvilli. The protein is Unconventional myosin-VIIb of Homo sapiens (Human).